Reading from the N-terminus, the 482-residue chain is tRNA sulfurtransferase (482 aa).

The region spanning 61-165 is the THUMP domain; it reads LAIRDALTRI…DDRLLLIKGR (105 aa). ATP contacts are provided by residues 183–184, lysine 265, glycine 287, and glutamine 296; that span reads LI. Residues cysteine 344 and cysteine 456 are joined by a disulfide bond. A Rhodanese domain is found at 404-482; sequence FGPNDVILDI…GFNNVKVYRL (79 aa). Cysteine 456 (cysteine persulfide intermediate) is an active-site residue.

This sequence belongs to the ThiI family.

It localises to the cytoplasm. The enzyme catalyses [ThiI sulfur-carrier protein]-S-sulfanyl-L-cysteine + a uridine in tRNA + 2 reduced [2Fe-2S]-[ferredoxin] + ATP + H(+) = [ThiI sulfur-carrier protein]-L-cysteine + a 4-thiouridine in tRNA + 2 oxidized [2Fe-2S]-[ferredoxin] + AMP + diphosphate. It catalyses the reaction [ThiS sulfur-carrier protein]-C-terminal Gly-Gly-AMP + S-sulfanyl-L-cysteinyl-[cysteine desulfurase] + AH2 = [ThiS sulfur-carrier protein]-C-terminal-Gly-aminoethanethioate + L-cysteinyl-[cysteine desulfurase] + A + AMP + 2 H(+). The protein operates within cofactor biosynthesis; thiamine diphosphate biosynthesis. Functionally, catalyzes the ATP-dependent transfer of a sulfur to tRNA to produce 4-thiouridine in position 8 of tRNAs, which functions as a near-UV photosensor. Also catalyzes the transfer of sulfur to the sulfur carrier protein ThiS, forming ThiS-thiocarboxylate. This is a step in the synthesis of thiazole, in the thiamine biosynthesis pathway. The sulfur is donated as persulfide by IscS. The sequence is that of tRNA sulfurtransferase from Shigella boydii serotype 18 (strain CDC 3083-94 / BS512).